An 84-amino-acid chain; its full sequence is Large ribosomal subunit protein bL27 (84 aa).

The disordered stretch occupies residues 1–21; it reads MAHKKGVGSSRNGRDSDGQRL.

It belongs to the bacterial ribosomal protein bL27 family.

The chain is Large ribosomal subunit protein bL27 from Trichlorobacter lovleyi (strain ATCC BAA-1151 / DSM 17278 / SZ) (Geobacter lovleyi).